An 878-amino-acid polypeptide reads, in one-letter code: Alanine--tRNA ligase (878 aa).

The Zn(2+) site is built by His-571, His-575, Cys-673, and His-677.

The protein belongs to the class-II aminoacyl-tRNA synthetase family. It depends on Zn(2+) as a cofactor.

The protein localises to the cytoplasm. The catalysed reaction is tRNA(Ala) + L-alanine + ATP = L-alanyl-tRNA(Ala) + AMP + diphosphate. Functionally, catalyzes the attachment of alanine to tRNA(Ala) in a two-step reaction: alanine is first activated by ATP to form Ala-AMP and then transferred to the acceptor end of tRNA(Ala). Also edits incorrectly charged Ser-tRNA(Ala) and Gly-tRNA(Ala) via its editing domain. The protein is Alanine--tRNA ligase of Syntrophus aciditrophicus (strain SB).